Consider the following 417-residue polypeptide: Phosphoglycerate kinase 1 (417 aa).

Residue serine 2 is modified to N-acetylserine. Phosphoserine occurs at positions 2 and 4. At lysine 6 the chain carries N6-succinyllysine. The residue at position 11 (lysine 11) is an N6-acetyllysine. 6 residues coordinate (2R)-3-phosphoglycerate: valine 23, aspartate 24, phenylalanine 25, asparagine 26, glutamine 38, and arginine 39. The segment at 38–43 (QRIKAA) is mitochondrial targeting region exposed following cis-trans isomerization by PIN1 and recognized by the TOM complex for mitochondrial translocation of the protein. At lysine 48 the chain carries N6-acetyllysine; alternate. Lysine 48 carries the N6-succinyllysine; alternate modification. (2R)-3-phosphoglycerate is bound by residues serine 62, histidine 63, glycine 65, and arginine 66. N6-acetyllysine is present on lysine 75. Tyrosine 76 is subject to Phosphotyrosine. N6-acetyllysine occurs at positions 86 and 91. Lysine 97 carries the N6-acetyllysine; alternate modification. An N6-(2-hydroxyisobutyryl)lysine; alternate modification is found at lysine 97. Residues leucine 122 and arginine 123 each contribute to the (2R)-3-phosphoglycerate site. Lysine 131 is subject to N6-acetyllysine; alternate. The residue at position 131 (lysine 131) is an N6-malonyllysine; alternate. Residue lysine 146 is modified to N6-acetyllysine. Residues histidine 170 and arginine 171 each coordinate (2R)-3-phosphoglycerate. Lysine 191 is subject to N6-succinyllysine. Position 196 is a phosphotyrosine (tyrosine 196). Lysine 199 is modified (N6-acetyllysine). Position 203 is a phosphoserine (serine 203). Glycine 214 lines the ADP pocket. CDP is bound at residue glycine 214. The AMP site is built by alanine 215 and lysine 216. Position 215 (alanine 215) interacts with ATP. Position 215 (alanine 215) interacts with Mg(2+). N6-(2-hydroxyisobutyryl)lysine is present on lysine 216. Residues alanine 218 and aspartate 219 each contribute to the Mg(2+) site. Aspartate 219 is a CDP binding site. Lysine 220 is a binding site for AMP. An ATP-binding site is contributed by lysine 220. At lysine 220 the chain carries N6-(2-hydroxyisobutyryl)lysine. An ADP-binding site is contributed by glycine 238. Glycine 238 is a CDP binding site. Glycine 239 serves as a coordination point for AMP. Glycine 239 provides a ligand contact to ATP. Residues lysine 267 and lysine 291 each carry the N6-acetyllysine modification. Residue glycine 313 participates in AMP binding. Residue glycine 313 coordinates ATP. Lysine 323 carries the N6-(2-hydroxyisobutyryl)lysine modification. Positions 338, 340, and 343 each coordinate CDP. Phenylalanine 343 lines the ADP pocket. Glutamate 344 lines the AMP pocket. Residue glutamate 344 coordinates ATP. Position 361 is an N6-acetyllysine (lysine 361). Positions 375 and 376 each coordinate ATP. Aspartate 375 is a binding site for Mg(2+).

It belongs to the phosphoglycerate kinase family. Monomer. Interacts with kinase MAPK1/ERK2; the interaction is direct, occurs under hypoxic conditions, and promotes its interaction with PIN1. Interacts with peptidyl-prolyl cis-trans isomerase PIN1; the interaction is direct, occurs under hypoxic conditions, and targets the protein to the mitochondrion by promoting interactions with the TOM complex. Interacts with mitochondrial circRNA mcPGK1 (via its 2nd stem-loop); the interaction is direct and targets the protein to the mitochondrion by promoting interactions with the TOM complex. Interacts with pyruvate dehydrogenase kinase PDK1; the interaction is direct, occurs under hypoxic conditions and leads to PDK1-mediated inhibition of pyruvate dehydrogenase complex activity. Mg(2+) serves as cofactor. In terms of processing, phosphorylated at Ser-203 by MAPK1/ERK2 under hypoxic conditions, which promotes its mitochondrial targeting. In terms of tissue distribution, testis, lung, brain, skeletal muscle, liver, intestine, and kidney (at protein level).

Its subcellular location is the cytoplasm. It localises to the cytosol. The protein localises to the mitochondrion matrix. It catalyses the reaction (2R)-3-phosphoglycerate + ATP = (2R)-3-phospho-glyceroyl phosphate + ADP. The catalysed reaction is L-seryl-[protein] + ATP = O-phospho-L-seryl-[protein] + ADP + H(+). It participates in carbohydrate degradation; glycolysis; pyruvate from D-glyceraldehyde 3-phosphate: step 2/5. Its function is as follows. Catalyzes one of the two ATP producing reactions in the glycolytic pathway via the reversible conversion of 1,3-diphosphoglycerate to 3-phosphoglycerate. Both L- and D- forms of purine and pyrimidine nucleotides can be used as substrates, but the activity is much lower on pyrimidines. In addition to its role as a glycolytic enzyme, it seems that PGK-1 acts as a polymerase alpha cofactor protein (primer recognition protein). Acts as a protein kinase when localized to the mitochondrion where it phosphorylates pyruvate dehydrogenase kinase PDK1 to inhibit pyruvate dehydrogenase complex activity and suppress the formation of acetyl-coenzyme A from pyruvate, and consequently inhibit oxidative phosphorylation and promote glycolysis. May play a role in sperm motility. This chain is Phosphoglycerate kinase 1 (Pgk1), found in Mus musculus (Mouse).